Consider the following 253-residue polypeptide: 5'/3'-nucleotidase SurE (253 aa).

The a divalent metal cation site is built by D8, D9, S39, and N92.

The protein belongs to the SurE nucleotidase family. A divalent metal cation serves as cofactor.

Its subcellular location is the cytoplasm. It catalyses the reaction a ribonucleoside 5'-phosphate + H2O = a ribonucleoside + phosphate. The catalysed reaction is a ribonucleoside 3'-phosphate + H2O = a ribonucleoside + phosphate. It carries out the reaction [phosphate](n) + H2O = [phosphate](n-1) + phosphate + H(+). In terms of biological role, nucleotidase with a broad substrate specificity as it can dephosphorylate various ribo- and deoxyribonucleoside 5'-monophosphates and ribonucleoside 3'-monophosphates with highest affinity to 3'-AMP. Also hydrolyzes polyphosphate (exopolyphosphatase activity) with the preference for short-chain-length substrates (P20-25). Might be involved in the regulation of dNTP and NTP pools, and in the turnover of 3'-mononucleotides produced by numerous intracellular RNases (T1, T2, and F) during the degradation of various RNAs. The protein is 5'/3'-nucleotidase SurE of Escherichia coli O7:K1 (strain IAI39 / ExPEC).